We begin with the raw amino-acid sequence, 356 residues long: Galactosylgalactosylxylosylprotein 3-beta-glucuronosyltransferase sqv-8 (356 aa).

Residues 1–9 lie on the Cytoplasmic side of the membrane; that stretch reads MFPSRLLEK. The helical; Signal-anchor for type II membrane protein transmembrane segment at 10-30 threads the bilayer; the sequence is WWLRAFIALVIFFVWQLFYAI. Residues 31 to 356 lie on the Lumenal side of the membrane; it reads NRVQSLEEER…LEAHALGVDN (326 aa). N-linked (GlcNAc...) asparagine glycosylation is found at N93 and N173. D208 serves as a coordination point for Mn(2+). N-linked (GlcNAc...) asparagine glycosylation is found at N246 and N272. E294 (proton acceptor) is an active-site residue.

Belongs to the glycosyltransferase 43 family.

It localises to the membrane. It catalyses the reaction 3-O-(beta-D-galactosyl-(1-&gt;3)-beta-D-galactosyl-(1-&gt;4)-beta-D-xylosyl)-L-seryl-[protein] + UDP-alpha-D-glucuronate = 3-O-(beta-D-GlcA-(1-&gt;3)-beta-D-Gal-(1-&gt;3)-beta-D-Gal-(1-&gt;4)-beta-D-Xyl)-L-seryl-[protein] + UDP + H(+). Glycosyltransferase required for the biosynthesis of the tetrasaccharide (GlcA-Gal-Gal-Xyl-)Ser core linker of heparan sulfate and chondroitin sulfate. May be involved in the biosynthesis of the HNK-1 carbohydrate epitope on glycoproteins. Required for embryonic development. Involved in the elongation of the pharyngeal isthmus during the later stages of embryonic development. Involved in vulval epithelium invagination. In Caenorhabditis elegans, this protein is Galactosylgalactosylxylosylprotein 3-beta-glucuronosyltransferase sqv-8 (sqv-8).